The sequence spans 130 residues: MSVTQYYGTGRRKTSTARVFLRPGSGKITVNQTDLDSYFGRETARMVVRQPLELLGSIGNFDVFVTVKGGGPSGQAGAIRHGITRALIQYDEANRSPLRKAGYVTRDAREVERKKVGLRKARKRPQFSKR.

This sequence belongs to the universal ribosomal protein uS9 family.

The polypeptide is Small ribosomal subunit protein uS9 (Hahella chejuensis (strain KCTC 2396)).